The sequence spans 525 residues: GMP synthase [glutamine-hydrolyzing] (525 aa).

One can recognise a Glutamine amidotransferase type-1 domain in the interval 8–207 (KILILDFGSQ…ALDICQCDAN (200 aa)). Residue C85 is the Nucleophile of the active site. Active-site residues include H181 and E183. The GMPS ATP-PPase domain maps to 208-400 (WKPASIIEDA…LGLPYDMLYR (193 aa)). 235–241 (SGGVDSS) contacts ATP.

As to quaternary structure, homodimer.

The enzyme catalyses XMP + L-glutamine + ATP + H2O = GMP + L-glutamate + AMP + diphosphate + 2 H(+). It functions in the pathway purine metabolism; GMP biosynthesis; GMP from XMP (L-Gln route): step 1/1. Its function is as follows. Catalyzes the synthesis of GMP from XMP. The sequence is that of GMP synthase [glutamine-hydrolyzing] from Shewanella woodyi (strain ATCC 51908 / MS32).